The primary structure comprises 247 residues: Pyridoxine 5'-phosphate synthase (247 aa).

Asparagine 12 contacts 3-amino-2-oxopropyl phosphate. Residue 14–15 (DH) participates in 1-deoxy-D-xylulose 5-phosphate binding. A 3-amino-2-oxopropyl phosphate-binding site is contributed by arginine 23. The active-site Proton acceptor is histidine 48. Positions 50 and 55 each coordinate 1-deoxy-D-xylulose 5-phosphate. The active-site Proton acceptor is glutamate 75. Threonine 105 is a 1-deoxy-D-xylulose 5-phosphate binding site. The active-site Proton donor is histidine 196. 3-amino-2-oxopropyl phosphate is bound by residues glycine 197 and 218 to 219 (GH).

Belongs to the PNP synthase family. As to quaternary structure, homooctamer; tetramer of dimers.

It is found in the cytoplasm. The catalysed reaction is 3-amino-2-oxopropyl phosphate + 1-deoxy-D-xylulose 5-phosphate = pyridoxine 5'-phosphate + phosphate + 2 H2O + H(+). Its pathway is cofactor biosynthesis; pyridoxine 5'-phosphate biosynthesis; pyridoxine 5'-phosphate from D-erythrose 4-phosphate: step 5/5. In terms of biological role, catalyzes the complicated ring closure reaction between the two acyclic compounds 1-deoxy-D-xylulose-5-phosphate (DXP) and 3-amino-2-oxopropyl phosphate (1-amino-acetone-3-phosphate or AAP) to form pyridoxine 5'-phosphate (PNP) and inorganic phosphate. The polypeptide is Pyridoxine 5'-phosphate synthase (Pseudomonas fluorescens (strain SBW25)).